The sequence spans 465 residues: Putative F-box protein At1g21990 (465 aa).

Residues 8–54 (RDLISGSPDEILGKILSFLPTHHAATTSVLSKRWRNLLPLVDKLELT) enclose the F-box domain.

This Arabidopsis thaliana (Mouse-ear cress) protein is Putative F-box protein At1g21990.